Here is a 409-residue protein sequence, read N- to C-terminus: Coagulation factor IX (409 aa).

Tyr-1, Asn-2, Glu-7, Glu-8, Glu-16, Glu-18, Glu-21, Glu-22, Glu-27, Glu-28, and Glu-31 together coordinate Ca(2+). The Gla domain occupies 1 to 47 (YNSGKLEESFVRGNLERECIEEKCSFEEAREVFENTEKTNEFWKQYV). 4-carboxyglutamate is present on residues Glu-7, Glu-8, Glu-16, Glu-18, Glu-21, Glu-22, Glu-27, Glu-28, Glu-31, Glu-34, Glu-37, and Glu-41. Glu-16 lines the Mg(2+) pocket. A disulfide bridge links Cys-19 with Cys-24. Residue Glu-21 participates in Mg(2+) binding. Glu-27 provides a ligand contact to Mg(2+). Glu-31 provides a ligand contact to Mg(2+). Positions 37, 41, 48, 49, and 51 each coordinate Ca(2+). 2 residues coordinate Mg(2+): Glu-37 and Glu-41. The 37-residue stretch at 48–84 (DGDQCEPNPCLNGGLCKDDINSYECWCQVGFEGKNCE) folds into the EGF-like 1; calcium-binding domain. Cystine bridges form between Cys-52/Cys-63, Cys-57/Cys-72, Cys-74/Cys-83, Cys-89/Cys-100, Cys-96/Cys-110, Cys-112/Cys-125, Cys-133/Cys-291, Cys-208/Cys-224, Cys-338/Cys-352, and Cys-363/Cys-391. Residues Asp-65 and Asp-66 each contribute to the Ca(2+) site. (3R)-3-hydroxyaspartate is present on Asp-65. Position 69 is a phosphoserine (Ser-69). The EGF-like 2 domain maps to 85–126 (LDATCNIKNGRCKQFCKTGADSKVLCSCTTGYRLAPDQKSCK). Positions 148–182 (AEIIFSNMDYENSTEVEPILDSLTESNQSSDDFIR) are cleaved as a propeptide — activation peptide. Tyr-157 is subject to Sulfotyrosine. Ser-160 carries the phosphoserine modification. At Thr-161 the chain carries Phosphothreonine; alternate. The O-linked (GalNAc...) threonine; alternate glycan is linked to Thr-161. A glycan (O-linked (GalNAc...) threonine) is linked at Thr-171. Residue Asn-174 is glycosylated (N-linked (GlcNAc...) asparagine). Residues 183–409 (IVGGENAKPG…YTKVSRYVNW (227 aa)) form the Peptidase S1 domain. His-223 serves as the catalytic Charge relay system. Residues Glu-237, Asn-239, Glu-242, Glu-244, and Glu-247 each coordinate Ca(2+). An N-linked (GlcNAc...) asparagine glycan is attached at Asn-262. Catalysis depends on Asp-271, which acts as the Charge relay system. The active-site Charge relay system is the Ser-367.

It belongs to the peptidase S1 family. Heterodimer of a light chain and a heavy chain; disulfide-linked. Interacts (inactive and activated) with F11 (activated) in calcium-dependent manner. Interacts with SERPINC1. In terms of processing, activated by factor XIa, which excises the activation peptide. The propeptide can also be removed by snake venom protease. Activated by coagulation factor VIIa-tissue factor (F7-F3) complex in calcium-dependent manner. The iron and 2-oxoglutarate dependent 3-hydroxylation of aspartate and asparagine is (R) stereospecific within EGF domains.

The protein localises to the secreted. It catalyses the reaction Selective cleavage of Arg-|-Ile bond in factor X to form factor Xa.. Factor IX is a vitamin K-dependent plasma protein that participates in the intrinsic pathway of blood coagulation by converting factor X to its active form in the presence of Ca(2+) ions, phospholipids, and factor VIIIa. This is Coagulation factor IX (F9) from Sus scrofa (Pig).